A 355-amino-acid polypeptide reads, in one-letter code: 3-dehydroquinate synthase (355 aa).

Residues 71 to 76, 105 to 109, 129 to 130, K142, and K151 each bind NAD(+); these read EGEASK, GVVGD, and TS. Zn(2+) is bound by residues E184, H246, and H263.

The protein belongs to the sugar phosphate cyclases superfamily. Dehydroquinate synthase family. The cofactor is Co(2+). It depends on Zn(2+) as a cofactor. NAD(+) serves as cofactor.

Its subcellular location is the cytoplasm. It carries out the reaction 7-phospho-2-dehydro-3-deoxy-D-arabino-heptonate = 3-dehydroquinate + phosphate. The protein operates within metabolic intermediate biosynthesis; chorismate biosynthesis; chorismate from D-erythrose 4-phosphate and phosphoenolpyruvate: step 2/7. Its function is as follows. Catalyzes the conversion of 3-deoxy-D-arabino-heptulosonate 7-phosphate (DAHP) to dehydroquinate (DHQ). The protein is 3-dehydroquinate synthase of Streptococcus gordonii (strain Challis / ATCC 35105 / BCRC 15272 / CH1 / DL1 / V288).